The primary structure comprises 95 residues: Protein translocase subunit SecE (95 aa).

The interval 1–35 (MTDAVGSIDMPDAEDEAPESKKKSRKGGKRGKKGP) is disordered. A compositionally biased stretch (basic residues) spans 22–35 (KKSRKGGKRGKKGP). Residues 67–87 (VVIVFVVVMIGLVTVLDIGFA) form a helical membrane-spanning segment.

The protein belongs to the SecE/SEC61-gamma family. In terms of assembly, component of the Sec protein translocase complex. Heterotrimer consisting of SecY, SecE and SecG subunits. The heterotrimers can form oligomers, although 1 heterotrimer is thought to be able to translocate proteins. Interacts with the ribosome. Interacts with SecDF, and other proteins may be involved. Interacts with SecA.

It localises to the cell membrane. Essential subunit of the Sec protein translocation channel SecYEG. Clamps together the 2 halves of SecY. May contact the channel plug during translocation. In Streptomyces griseus, this protein is Protein translocase subunit SecE.